We begin with the raw amino-acid sequence, 272 residues long: Putative imidazole glycerol phosphate synthase subunit hisF2 (272 aa).

Asp-133 is a catalytic residue.

Belongs to the HisA/HisF family. As to quaternary structure, heterodimer of HisH and HisF.

It localises to the cytoplasm. It catalyses the reaction 5-[(5-phospho-1-deoxy-D-ribulos-1-ylimino)methylamino]-1-(5-phospho-beta-D-ribosyl)imidazole-4-carboxamide + L-glutamine = D-erythro-1-(imidazol-4-yl)glycerol 3-phosphate + 5-amino-1-(5-phospho-beta-D-ribosyl)imidazole-4-carboxamide + L-glutamate + H(+). It functions in the pathway amino-acid biosynthesis; L-histidine biosynthesis; L-histidine from 5-phospho-alpha-D-ribose 1-diphosphate: step 5/9. IGPS catalyzes the conversion of PRFAR and glutamine to IGP, AICAR and glutamate. The HisF subunit catalyzes the cyclization activity that produces IGP and AICAR from PRFAR using the ammonia provided by the HisH subunit. This Vibrio vulnificus (strain YJ016) protein is Putative imidazole glycerol phosphate synthase subunit hisF2 (hisF2).